The primary structure comprises 227 residues: Ribose-5-phosphate isomerase A (227 aa).

Substrate-binding positions include 26–29 (TGST), 82–85 (DGAD), and 95–98 (KGGG). The active-site Proton acceptor is the E104. Residue K122 participates in substrate binding.

This sequence belongs to the ribose 5-phosphate isomerase family. As to quaternary structure, homodimer.

The enzyme catalyses aldehydo-D-ribose 5-phosphate = D-ribulose 5-phosphate. The protein operates within carbohydrate degradation; pentose phosphate pathway; D-ribose 5-phosphate from D-ribulose 5-phosphate (non-oxidative stage): step 1/1. Its function is as follows. Catalyzes the reversible conversion of ribose-5-phosphate to ribulose 5-phosphate. The protein is Ribose-5-phosphate isomerase A of Streptococcus equi subsp. equi (strain 4047).